The sequence spans 250 residues: DNA repair protein RecO (250 aa).

This sequence belongs to the RecO family.

Functionally, involved in DNA repair and RecF pathway recombination. This Staphylococcus aureus (strain MRSA252) protein is DNA repair protein RecO.